Here is a 977-residue protein sequence, read N- to C-terminus: Glutamate receptor 2 (977 aa).

A signal peptide spans 1–19 (MNKNLLVFGFLIFVKIGET). Residues 20 to 621 (SKKFPLRAFV…FSFMEPLGMT (602 aa)) are Extracellular-facing. 6 N-linked (GlcNAc...) asparagine glycosylation sites follow: Asn36, Asn227, Asn291, Asn427, Asn532, and Asn566. A helical membrane pass occupies residues 622–642 (IWIFTLSSYFGVSLTIFLVSW). Residues 643–695 (FSPYEKRIEFKRGEFTVTNEFTLYNSLWFTLAAFMQQGTDILPRAVSGRIASS) are Cytoplasmic-facing. Residues 696-716 (CWWFFTLIIVSSYTANLAAFL) traverse the membrane as a helical segment. The Extracellular portion of the chain corresponds to 717 to 898 (TLERMTPPIE…GTSSSLNLSK (182 aa)). Asn783 and Asn895 each carry an N-linked (GlcNAc...) asparagine glycan. A helical membrane pass occupies residues 899-919 (VAGIFYILLAGMVLSMCTALV). The Cytoplasmic portion of the chain corresponds to 920-977 (EFLFRKNKENREKERNRMRSSRPLKPGILASCERAKQKQLQNRRTKSEEVSTPRSTLF). A disordered region spans residues 954-977 (AKQKQLQNRRTKSEEVSTPRSTLF).

It belongs to the glutamate-gated ion channel (TC 1.A.10.1) family. Command interneurons of the locomotory control circuit (AIA, AIB, AVA, AVD, AVE, PVC, RIA, RIG and RIR) and motor neurons (AVG, M1, RMDD and RMDV).

The protein localises to the membrane. The protein resides in the postsynaptic cell membrane. Functionally, L-glutamate acts as an excitatory neurotransmitter at many synapses in the central nervous system. The postsynaptic actions of glutamate are mediated by a variety of receptors that are named according to their selective agonists. Required for response to mechanical and osmotic stimuli. This chain is Glutamate receptor 2 (glr-2), found in Caenorhabditis elegans.